We begin with the raw amino-acid sequence, 501 residues long: Lysine--tRNA ligase (501 aa).

Mg(2+) is bound by residues E410 and E417.

It belongs to the class-II aminoacyl-tRNA synthetase family. As to quaternary structure, homodimer. Requires Mg(2+) as cofactor.

It is found in the cytoplasm. The enzyme catalyses tRNA(Lys) + L-lysine + ATP = L-lysyl-tRNA(Lys) + AMP + diphosphate. The polypeptide is Lysine--tRNA ligase (Shewanella pealeana (strain ATCC 700345 / ANG-SQ1)).